We begin with the raw amino-acid sequence, 236 residues long: Thylakoid lumenal 17.4 kDa protein, chloroplastic (236 aa).

Pentapeptide repeat domains are found at residues 124-163 and 169-208; these read TNLK…SFKG and AVID…VFED.

As to quaternary structure, interacts in vitro with LTO1.

It localises to the plastid. The protein resides in the chloroplast thylakoid lumen. In Arabidopsis thaliana (Mouse-ear cress), this protein is Thylakoid lumenal 17.4 kDa protein, chloroplastic.